The chain runs to 203 residues: Outer-membrane lipoprotein LolB (203 aa).

Positions 1 to 18 are cleaved as a signal peptide; sequence MTLRSFLILLLSSIVLAG. C19 is lipidated: N-palmitoyl cysteine. C19 carries S-diacylglycerol cysteine lipidation.

The protein belongs to the LolB family. In terms of assembly, monomer.

The protein resides in the cell outer membrane. Plays a critical role in the incorporation of lipoproteins in the outer membrane after they are released by the LolA protein. The sequence is that of Outer-membrane lipoprotein LolB from Vibrio campbellii (strain ATCC BAA-1116).